Here is a 209-residue protein sequence, read N- to C-terminus: MMENYITSFQLRFCPAAYLHLEQLPSLWRSILPYLPQWRDSAHLNAALLDEFSLDTDYEEPHGLGALPLQPQSQLELLLCRLGLVLHGEAIRRCVLASPLQQLLTLVNQETLRQIIVQHELLIGPWPTHWQRPLPTEIESRTMIQSGLAFWLAAMEPQPQAWCKRLSLRLPLATPSEPWLVAESQRPLAQTLCHKLVKQVTPTCSHLFK.

Functionally, belongs to an operon involved in the translocation of Yop proteins across the bacterial membranes or in the specific control of this function. The sequence is that of Yop proteins translocation protein K (yscK) from Yersinia pseudotuberculosis serotype I (strain IP32953).